Reading from the N-terminus, the 70-residue chain is MKKRSQVFCIFIAMVLLILPLSMSDVPEICKICGEECERFCFKRRFRFCCYDYGFMKSDDESPSLQIPNV.

An N-terminal signal peptide occupies residues 1-24; the sequence is MKKRSQVFCIFIAMVLLILPLSMS.

It belongs to the scoloptoxin-20 family. Contains 3 disulfide bonds. Expressed by the venom gland.

Its subcellular location is the secreted. The protein is U-scoloptoxin(20)-Sm1a of Scolopendra morsitans (Tanzanian blue ringleg centipede).